The chain runs to 304 residues: Acetylglutamate kinase (304 aa).

Substrate contacts are provided by residues 71–72 (GG), Arg-93, and Asn-193.

This sequence belongs to the acetylglutamate kinase family. ArgB subfamily.

The protein resides in the cytoplasm. The enzyme catalyses N-acetyl-L-glutamate + ATP = N-acetyl-L-glutamyl 5-phosphate + ADP. It functions in the pathway amino-acid biosynthesis; L-arginine biosynthesis; N(2)-acetyl-L-ornithine from L-glutamate: step 2/4. Its function is as follows. Catalyzes the ATP-dependent phosphorylation of N-acetyl-L-glutamate. The polypeptide is Acetylglutamate kinase (Streptomyces avermitilis (strain ATCC 31267 / DSM 46492 / JCM 5070 / NBRC 14893 / NCIMB 12804 / NRRL 8165 / MA-4680)).